A 102-amino-acid polypeptide reads, in one-letter code: Small ribosomal subunit protein uS10 (102 aa).

Belongs to the universal ribosomal protein uS10 family. As to quaternary structure, part of the 30S ribosomal subunit.

In terms of biological role, involved in the binding of tRNA to the ribosomes. This is Small ribosomal subunit protein uS10 from Bacillus anthracis (strain A0248).